We begin with the raw amino-acid sequence, 134 residues long: Small ribosomal subunit protein uS8c (134 aa).

The protein belongs to the universal ribosomal protein uS8 family. Part of the 30S ribosomal subunit.

The protein localises to the plastid. It is found in the chloroplast. Functionally, one of the primary rRNA binding proteins, it binds directly to 16S rRNA central domain where it helps coordinate assembly of the platform of the 30S subunit. The protein is Small ribosomal subunit protein uS8c (rps8) of Gossypium hirsutum (Upland cotton).